A 294-amino-acid chain; its full sequence is MTSNEITTTSTFSDAIIQQADNPTDINDARIYIQQGNKAKPITFQELLSLYTLNNIDIIFSRNFNLEGILSLITPRGLPKSTAIFARSSRTVVLNTVFRRLTLGTPGWNIEADEFLKAYNGYKQGTYLNINGALVRNSTDGSKPSLQTEYIDDFAALVTTIMQYEFDFDTFEAIQLWLTSKCKDVTLSSGSLVLKSTSERIVTRYTVKTNLNTINLYELGNNKSSEYEPMLKVLAMHMLHSIGRSIGQDTIVSRVPNINMAESVASGESFLSPDSCFRSLILIALLLNDKYVSL.

This is an uncharacterized protein from Diadromus pulchellus idnoreovirus 1 (DpIRV-1).